Here is a 376-residue protein sequence, read N- to C-terminus: Enoyl-[acyl-carrier-protein] reductase, mitochondrial (376 aa).

Tyrosine 72 serves as the catalytic Proton donor. NADP(+) contacts are provided by residues asparagine 154, 182–185 (TSAV), 205–207 (RDR), 280–283 (YGGM), 305–307 (YWI), and lysine 369.

This sequence belongs to the zinc-containing alcohol dehydrogenase family. Quinone oxidoreductase subfamily. As to quaternary structure, homodimer.

It is found in the mitochondrion matrix. The enzyme catalyses a 2,3-saturated acyl-[ACP] + NADP(+) = a (2E)-enoyl-[ACP] + NADPH + H(+). Functionally, catalyzes the NADPH-dependent reduction of trans-2-enoyl thioesters in mitochondrial fatty acid synthesis (fatty acid synthesis type II). Fatty acid chain elongation in mitochondria uses acyl carrier protein (ACP) as an acyl group carrier, but the enzyme accepts both ACP and CoA thioesters as substrates in vitro. Required for respiration and the maintenance of the mitochondrial compartment. The polypeptide is Enoyl-[acyl-carrier-protein] reductase, mitochondrial (ETR1) (Eremothecium gossypii (strain ATCC 10895 / CBS 109.51 / FGSC 9923 / NRRL Y-1056) (Yeast)).